A 109-amino-acid chain; its full sequence is MKGMDEYEKIINDLNTINSKAKFIGIKIIMVRRIIDMHKDNDKLIKKVLEGIKNTDLYDLVLNACPELKGERIKDVYFKKNDYFNVIKKTMSSENTVLKNVLINDESPP.

It carries out the reaction RNA(n) + a ribonucleoside 5'-triphosphate = RNA(n+1) + diphosphate. In terms of biological role, DNA-dependent RNA polymerase catalyzes the transcription of DNA into RNA using the four ribonucleoside triphosphates as substrates. The chain is DNA-directed RNA polymerase subunit I (rpoI) from Methanocaldococcus jannaschii (strain ATCC 43067 / DSM 2661 / JAL-1 / JCM 10045 / NBRC 100440) (Methanococcus jannaschii).